Reading from the N-terminus, the 415-residue chain is Alpha-1,3/1,6-mannosyltransferase ALG2 (415 aa).

The Cytoplasmic segment spans residues 1–84 (MAENLYRARS…LPRSLGWGGR (84 aa)). Residues 85 to 105 (GAAICSYVRMVFLALYVLFLS) constitute an intramembrane region (helical). Residues 106 to 415 (GEEFDVVVCD…QLYQYVTKLV (310 aa)) lie on the Cytoplasmic side of the membrane.

This sequence belongs to the glycosyltransferase group 1 family. Glycosyltransferase 4 subfamily.

It localises to the endoplasmic reticulum membrane. The enzyme catalyses a beta-D-Man-(1-&gt;4)-beta-D-GlcNAc-(1-&gt;4)-alpha-D-GlcNAc-diphospho-di-trans,poly-cis-dolichol + GDP-alpha-D-mannose = an alpha-D-Man-(1-&gt;3)-beta-D-Man-(1-&gt;4)-beta-D-GlcNAc-(1-&gt;4)-alpha-D-GlcNAc-diphospho-di-trans,poly-cis-dolichol + GDP + H(+). It catalyses the reaction an alpha-D-Man-(1-&gt;3)-beta-D-Man-(1-&gt;4)-beta-D-GlcNAc-(1-&gt;4)-alpha-D-GlcNAc-diphospho-di-trans,poly-cis-dolichol + GDP-alpha-D-mannose = an alpha-D-Man-(1-&gt;3)-[alpha-D-Man-(1-&gt;6)]-beta-D-Man-(1-&gt;4)-beta-D-GlcNAc-(1-&gt;4)-alpha-D-GlcNAc-diphospho-di-trans,poly-cis-dolichol + GDP + H(+). The catalysed reaction is a beta-D-Man-(1-&gt;4)-beta-D-GlcNAc-(1-&gt;4)-alpha-D-GlcNAc-diphospho-di-trans,poly-cis-dolichol + GDP-alpha-D-mannose = an alpha-D-Man-(1-&gt;6)-beta-D-Man-(1-&gt;4)-beta-D-GlcNAc-(1-&gt;4)-alpha-D-GlcNAc-diphospho-di-trans,poly-cis-dolichol + GDP + H(+). It carries out the reaction an alpha-D-Man-(1-&gt;6)-beta-D-Man-(1-&gt;4)-beta-D-GlcNAc-(1-&gt;4)-alpha-D-GlcNAc-diphospho-di-trans,poly-cis-dolichol + GDP-alpha-D-mannose = an alpha-D-Man-(1-&gt;3)-[alpha-D-Man-(1-&gt;6)]-beta-D-Man-(1-&gt;4)-beta-D-GlcNAc-(1-&gt;4)-alpha-D-GlcNAc-diphospho-di-trans,poly-cis-dolichol + GDP + H(+). It functions in the pathway protein modification; protein glycosylation. In terms of biological role, mannosyltransferase that operates in the biosynthetic pathway of dolichol-linked oligosaccharides, the glycan precursors employed in protein asparagine (N)-glycosylation. The assembly of dolichol-linked oligosaccharides begins on the cytosolic side of the endoplasmic reticulum membrane and finishes in its lumen. The sequential addition of sugars to dolichol pyrophosphate produces dolichol-linked oligosaccharides containing fourteen sugars, including two GlcNAcs, nine mannoses and three glucoses. Once assembled, the oligosaccharide is transferred from the lipid to nascent proteins by oligosaccharyltransferases. Catalyzes, on the cytoplasmic face of the endoplasmic reticulum, the addition of the second and third mannose residues to the dolichol-linked oligosaccharide chain, to produce Man3GlcNAc(2)-PP-dolichol core oligosaccharide. Man3GlcNAc(2)-PP-dolichol is a substrate for ALG11, the following enzyme in the biosynthetic pathway. While both alpha 1,3 and alpha 1,6 linkages are possible, the sequential addition of alpha 1,3 followed by alpha 1,6 is probably the preferred route. The chain is Alpha-1,3/1,6-mannosyltransferase ALG2 (Alg2) from Mus musculus (Mouse).